A 172-amino-acid polypeptide reads, in one-letter code: Bone marrow stromal antigen 2 (172 aa).

The Cytoplasmic segment spans residues 1-26 (MAPSFYHYLPVAMDERWEPKGWSIRR). Residue Lys20 forms a Glycyl lysine isopeptide (Lys-Gly) (interchain with G-Cter in ubiquitin) linkage. A helical; Signal-anchor for type II membrane protein membrane pass occupies residues 27 to 47 (WWLVAAILVVLIGVVLVCLIV). Over 48 to 152 (YFANAAHSEA…EISTTVQVNS (105 aa)) the chain is Extracellular. Asn70 and Asn97 each carry an N-linked (GlcNAc...) asparagine glycan. Positions 103–149 (LRDSLKKKVSQTQEQQARIKELENKIERLNQELENLRTQKEISTTVQ) form a coiled coil. Ser152 carries the GPI-anchor amidated serine lipid modification. Residues 153-172 (GGSVVVSSLLVLVAVLFLHF) constitute a propeptide, removed in mature form.

Parallel homodimer; disulfide-linked. May form homotetramers under reducing conditions. Isoform 1 and isoform 2 form homodimers and also heterodimers with each other. Dimerization is essential for its antiviral activity. Interacts (via cytoplasmic domain) with ARHGAP44. Interacts with MMP14 (via C-terminal cytoplasmic tail). Interacts with LILRA4/ILT7. Interacts with RNF115. N-glycosylated. In terms of processing, the GPI anchor is essential for its antiviral activity. In terms of tissue distribution, ubiquitously expressed, with highest levels in brain and liver. Present in liver (at protein level).

Its subcellular location is the golgi apparatus. The protein resides in the trans-Golgi network. It is found in the cell membrane. The protein localises to the late endosome. It localises to the membrane raft. Its subcellular location is the cytoplasm. The protein resides in the apical cell membrane. Functionally, IFN-induced antiviral host restriction factor which efficiently blocks the release of diverse mammalian enveloped viruses by directly tethering nascent virions to the membranes of infected cells. Acts as a direct physical tether, holding virions to the cell membrane and linking virions to each other. The tethered virions can be internalized by endocytosis and subsequently degraded or they can remain on the cell surface. In either case, their spread as cell-free virions is restricted. Its target viruses belong to diverse families, including retroviridae: human immunodeficiency virus type 1 (HIV-1), mouse mammary tumor virus (MMTV) and murine leukemia virus (MLV), filoviridae: ebola virus (EBOV), arenaviridae: lassa virus (LASV), and rhabdoviridae: vesicular stomatitis virus (VSV). Can inhibit cell surface proteolytic activity of MMP14 causing decreased activation of MMP15 which results in inhibition of cell growth and migration. Can stimulate signaling by LILRA4/ILT7 and consequently provide negative feedback to the production of IFN by plasmacytoid dendritic cells in response to viral infection. Plays a role in the organization of the subapical actin cytoskeleton in polarized epithelial cells. The sequence is that of Bone marrow stromal antigen 2 (Bst2) from Rattus norvegicus (Rat).